A 152-amino-acid polypeptide reads, in one-letter code: UPF0225 protein YchJ (152 aa).

It belongs to the UPF0225 family.

This Escherichia coli O139:H28 (strain E24377A / ETEC) protein is UPF0225 protein YchJ.